Consider the following 228-residue polypeptide: Uracil-DNA glycosylase (228 aa).

Residue Asp-64 is the Proton acceptor of the active site.

The protein belongs to the uracil-DNA glycosylase (UDG) superfamily. UNG family.

It is found in the cytoplasm. It carries out the reaction Hydrolyzes single-stranded DNA or mismatched double-stranded DNA and polynucleotides, releasing free uracil.. In terms of biological role, excises uracil residues from the DNA which can arise as a result of misincorporation of dUMP residues by DNA polymerase or due to deamination of cytosine. The polypeptide is Uracil-DNA glycosylase (Pectobacterium carotovorum subsp. carotovorum (strain PC1)).